Here is a 569-residue protein sequence, read N- to C-terminus: Probable pyruvate decarboxylase Pdc101 (569 aa).

Positions 33 and 120 each coordinate substrate. Residue Ser233 is modified to Phosphoserine. Positions 396–478 are thiamine pyrophosphate binding; the sequence is DSWFNGLQMK…FLLNNRGYTI (83 aa). Mg(2+) contacts are provided by Asp446, Asn473, and Gly475. Glu479 provides a ligand contact to substrate. The residue at position 521 (Thr521) is a Phosphothreonine. Ser522 is subject to Phosphoserine.

It belongs to the TPP enzyme family. Homotetramer. It depends on a metal cation as a cofactor. Requires thiamine diphosphate as cofactor.

It carries out the reaction a 2-oxocarboxylate + H(+) = an aldehyde + CO2. This chain is Probable pyruvate decarboxylase Pdc101 (pdc101), found in Schizosaccharomyces pombe (strain 972 / ATCC 24843) (Fission yeast).